We begin with the raw amino-acid sequence, 775 residues long: Chitin synthase 6 (775 aa).

Helical transmembrane passes span 19–39 (VLLMACLEWFLWLAAFLYCLV), 54–74 (CIIVGTAFVLLRVIFLPIMVV), 94–114 (LQWFAFWAFAILLTVPWLFCI), 441–461 (FMQNTIRTTALLFFVMVLAIM), 470–490 (LPVGFIAISLGLNWMLMLYFG), and 498–518 (IWLYPLMFILNPFYNWYYMVY). Over residues 532–541 (RADAAAADSH) the composition is skewed to low complexity. 2 disordered regions span residues 532 to 603 (RADA…DGKF) and 702 to 775 (PSAF…KTSR). The span at 542 to 556 (TTAREAAEQAEKQGD) shows a compositional bias: basic and acidic residues. Residues 577-586 (NRESTTTSEL) show a composition bias toward polar residues. Over residues 702-713 (PSAFPHAHSASA) the composition is skewed to low complexity. A glycan (N-linked (GlcNAc...) asparagine) is linked at N724. Residues 732–741 (RSEDIQRFSE) are compositionally biased toward basic and acidic residues. Positions 754–763 (SRNVGNSSFA) are enriched in polar residues. A glycan (N-linked (GlcNAc...) asparagine) is linked at N759. The span at 766–775 (MAKRTPKTSR) shows a compositional bias: basic residues.

This sequence belongs to the chitin synthase family. Class VII subfamily.

It is found in the cell membrane. It carries out the reaction [(1-&gt;4)-N-acetyl-beta-D-glucosaminyl](n) + UDP-N-acetyl-alpha-D-glucosamine = [(1-&gt;4)-N-acetyl-beta-D-glucosaminyl](n+1) + UDP + H(+). Functionally, polymerizes chitin, a structural polymer of the cell wall and septum, by transferring the sugar moiety of UDP-GlcNAc to the non-reducing end of the growing chitin polymer. Shows additive effects in septum formation with CHS1, CHS2, CHS3A, CHS4, CHS5 and CHS7. Involved in virulence and mediates mycotoxin deoxinivalenol (DON) biosynthesis via the regulation of the expression of TRI4, TRI5 and TRI6. The polypeptide is Chitin synthase 6 (Gibberella zeae (strain ATCC MYA-4620 / CBS 123657 / FGSC 9075 / NRRL 31084 / PH-1) (Wheat head blight fungus)).